A 243-amino-acid polypeptide reads, in one-letter code: Aquaporin SIP1-2 (243 aa).

2 helical membrane passes run A9–A29 and F45–C65. The short motif at N74 to T76 is the NPA 1 element. 3 consecutive transmembrane segments (helical) span residues L98 to A118, G136 to V156, and I163 to Y183. Residues N189–A191 carry the NPA 2 motif. Residues V211–F231 form a helical membrane-spanning segment.

It belongs to the MIP/aquaporin (TC 1.A.8) family. SIP (TC 1.A.8.10) subfamily.

The protein resides in the membrane. Aquaporins facilitate the transport of water and small neutral solutes across cell membranes. This chain is Aquaporin SIP1-2 (SIP1-2), found in Zea mays (Maize).